A 94-amino-acid chain; its full sequence is Cell division topological specificity factor (94 aa).

This sequence belongs to the MinE family.

Functionally, prevents the cell division inhibition by proteins MinC and MinD at internal division sites while permitting inhibition at polar sites. This ensures cell division at the proper site by restricting the formation of a division septum at the midpoint of the long axis of the cell. The polypeptide is Cell division topological specificity factor (Clostridioides difficile (strain 630) (Peptoclostridium difficile)).